The sequence spans 145 residues: Transcription antitermination protein NusB (145 aa).

This sequence belongs to the NusB family.

Involved in transcription antitermination. Required for transcription of ribosomal RNA (rRNA) genes. Binds specifically to the boxA antiterminator sequence of the ribosomal RNA (rrn) operons. This Geotalea daltonii (strain DSM 22248 / JCM 15807 / FRC-32) (Geobacter daltonii) protein is Transcription antitermination protein NusB.